The following is a 392-amino-acid chain: Succinyl-diaminopimelate desuccinylase (392 aa).

A Zn(2+)-binding site is contributed by H76. The active site involves D78. Residue D107 participates in Zn(2+) binding. The active-site Proton acceptor is E143. Residues E144, E172, and H357 each coordinate Zn(2+).

This sequence belongs to the peptidase M20A family. DapE subfamily. In terms of assembly, homodimer. Requires Zn(2+) as cofactor. Co(2+) serves as cofactor.

It carries out the reaction N-succinyl-(2S,6S)-2,6-diaminopimelate + H2O = (2S,6S)-2,6-diaminopimelate + succinate. It functions in the pathway amino-acid biosynthesis; L-lysine biosynthesis via DAP pathway; LL-2,6-diaminopimelate from (S)-tetrahydrodipicolinate (succinylase route): step 3/3. Catalyzes the hydrolysis of N-succinyl-L,L-diaminopimelic acid (SDAP), forming succinate and LL-2,6-diaminopimelate (DAP), an intermediate involved in the bacterial biosynthesis of lysine and meso-diaminopimelic acid, an essential component of bacterial cell walls. This is Succinyl-diaminopimelate desuccinylase from Helicobacter hepaticus (strain ATCC 51449 / 3B1).